Reading from the N-terminus, the 113-residue chain is Hydrogenase maturation factor HypA (113 aa).

Position 2 (H2) interacts with Ni(2+). The Zn(2+) site is built by C73, C76, C89, and C92.

This sequence belongs to the HypA/HybF family.

Involved in the maturation of [NiFe] hydrogenases. Required for nickel insertion into the metal center of the hydrogenase. This chain is Hydrogenase maturation factor HypA, found in Methylocella silvestris (strain DSM 15510 / CIP 108128 / LMG 27833 / NCIMB 13906 / BL2).